A 227-amino-acid chain; its full sequence is Prolactin-5A1 (227 aa).

The signal sequence occupies residues 1-27 (MQIQPHPSGALLLLLLSNLLMWENVAS). N-linked (GlcNAc...) asparagine glycosylation occurs at N47. C85 and C204 form a disulfide bridge.

The protein belongs to the somatotropin/prolactin family. In terms of tissue distribution, expressed specifically in placenta. Highly expressed in invasive trophoblast cells lining the central placental vessel.

The protein resides in the secreted. The protein is Prolactin-5A1 (Prl5a1) of Rattus norvegicus (Rat).